The chain runs to 865 residues: Alanine--tRNA ligase (865 aa).

Zn(2+) is bound by residues histidine 568, histidine 572, cysteine 670, and histidine 674.

The protein belongs to the class-II aminoacyl-tRNA synthetase family. Zn(2+) serves as cofactor.

It is found in the cytoplasm. The catalysed reaction is tRNA(Ala) + L-alanine + ATP = L-alanyl-tRNA(Ala) + AMP + diphosphate. Catalyzes the attachment of alanine to tRNA(Ala) in a two-step reaction: alanine is first activated by ATP to form Ala-AMP and then transferred to the acceptor end of tRNA(Ala). Also edits incorrectly charged Ser-tRNA(Ala) and Gly-tRNA(Ala) via its editing domain. The polypeptide is Alanine--tRNA ligase (Vibrio campbellii (strain ATCC BAA-1116)).